Consider the following 1937-residue polypeptide: Myosin-8 (1937 aa).

A Myosin N-terminal SH3-like domain is found at 35–84; that stretch reads DAKTSVFVAEPKESYVKSVIQSKDGGKVTVKTESGATLTVKEDQVFPMNP. Phosphothreonine is present on residues T66 and T71. The Myosin motor domain occupies 88 to 781; sequence DKIEDMAMMT…LLGLLEEMRD (694 aa). At K132 the chain carries N6,N6,N6-trimethyllysine. 181-188 serves as a coordination point for ATP; it reads GESGAGKT. Residue Y389 is modified to Phosphotyrosine. Phosphothreonine is present on T419. A Phosphotyrosine modification is found at Y424. S625 carries the post-translational modification Phosphoserine. An actin-binding region spans residues 658-680; sequence LNKLMTNLRSTHPHFVRCIIPNE. H756 carries the post-translational modification Pros-methylhistidine. The segment at 760 to 774 is actin-binding; it reads KFGHTKVFFKAGLLG. The 33-residue stretch at 781 to 813 folds into the IQ domain; sequence DEKLAQIITRTQAVCRGYLMRVEYQKMLLRRES. Positions 842-1937 form a coiled coil; it reads LLKSAETEKE…REVHTKISAE (1096 aa). Residues S1091 and S1095 each carry the phosphoserine modification. The disordered stretch occupies residues 1125–1171; it reads IEAERASRAKAEKQRSDLSRELEEISERLEEAGGATSAQVEMNKKRE. Residues 1127–1155 are compositionally biased toward basic and acidic residues; that stretch reads AERASRAKAEKQRSDLSRELEEISERLEE. Phosphoserine occurs at positions 1161 and 1236. T1254 carries the post-translational modification Phosphothreonine. Phosphoserine is present on S1260. Residue T1285 is modified to Phosphothreonine. Residues S1291, S1302, and S1305 each carry the phosphoserine modification. Y1463 carries the post-translational modification Phosphotyrosine. Residue T1466 is modified to Phosphothreonine. Position 1491 is a phosphotyrosine (Y1491). At S1494 the chain carries Phosphoserine. Residue T1500 is modified to Phosphothreonine. At S1513 the chain carries Phosphoserine. T1516 carries the post-translational modification Phosphothreonine. Phosphoserine is present on residues S1553, S1573, S1602, S1713, and S1725. Phosphothreonine is present on T1729. S1738 carries the post-translational modification Phosphoserine.

The protein belongs to the TRAFAC class myosin-kinesin ATPase superfamily. Myosin family. As to quaternary structure, muscle myosin is a hexameric protein that consists of 2 heavy chain subunits (MHC), 2 alkali light chain subunits (MLC) and 2 regulatory light chain subunits (MLC-2).

The protein localises to the cytoplasm. It is found in the myofibril. Muscle contraction. This chain is Myosin-8 (Myh8), found in Mus musculus (Mouse).